Reading from the N-terminus, the 374-residue chain is uncharacterized protein (374 aa).

The signal sequence occupies residues 1–21 (MSIISRVCIPCAVLLFAQLHA). In terms of domain architecture, Fibronectin type-III spans 22–102 (KELVHVSQLK…ASASAWTSLS (81 aa)).

This is an uncharacterized protein from Treponema pallidum (strain Nichols).